The following is a 410-amino-acid chain: 2-oxoisovalerate dehydrogenase subunit alpha (410 aa).

This sequence belongs to the BCKDHA family. Heterodimer of an alpha and a beta chain. Requires thiamine diphosphate as cofactor.

It catalyses the reaction N(6)-[(R)-lipoyl]-L-lysyl-[protein] + 3-methyl-2-oxobutanoate + H(+) = N(6)-[(R)-S(8)-2-methylpropanoyldihydrolipoyl]-L-lysyl-[protein] + CO2. In terms of biological role, the branched-chain alpha-keto dehydrogenase complex catalyzes the overall conversion of alpha-keto acids to acyl-CoA and CO(2). It contains multiple copies of three enzymatic components: branched-chain alpha-keto acid decarboxylase (E1), lipoamide acyltransferase (E2) and lipoamide dehydrogenase (E3). The chain is 2-oxoisovalerate dehydrogenase subunit alpha (bkdA1) from Pseudomonas aeruginosa (strain ATCC 15692 / DSM 22644 / CIP 104116 / JCM 14847 / LMG 12228 / 1C / PRS 101 / PAO1).